Consider the following 353-residue polypeptide: Probable dual-specificity RNA methyltransferase RlmN (353 aa).

Glu104 acts as the Proton acceptor in catalysis. The region spanning 112 to 341 (DGGRKTICIS…ILNRRSPGKD (230 aa)) is the Radical SAM core domain. A disulfide bridge connects residues Cys119 and Cys346. The [4Fe-4S] cluster site is built by Cys126, Cys130, and Cys133. S-adenosyl-L-methionine-binding positions include 173 to 174 (GE), Ser205, 228 to 230 (SLN), and Asn304. Cys346 (S-methylcysteine intermediate) is an active-site residue.

It belongs to the radical SAM superfamily. RlmN family. Requires [4Fe-4S] cluster as cofactor.

The protein resides in the cytoplasm. It carries out the reaction adenosine(2503) in 23S rRNA + 2 reduced [2Fe-2S]-[ferredoxin] + 2 S-adenosyl-L-methionine = 2-methyladenosine(2503) in 23S rRNA + 5'-deoxyadenosine + L-methionine + 2 oxidized [2Fe-2S]-[ferredoxin] + S-adenosyl-L-homocysteine. The catalysed reaction is adenosine(37) in tRNA + 2 reduced [2Fe-2S]-[ferredoxin] + 2 S-adenosyl-L-methionine = 2-methyladenosine(37) in tRNA + 5'-deoxyadenosine + L-methionine + 2 oxidized [2Fe-2S]-[ferredoxin] + S-adenosyl-L-homocysteine. Specifically methylates position 2 of adenine 2503 in 23S rRNA and position 2 of adenine 37 in tRNAs. The polypeptide is Probable dual-specificity RNA methyltransferase RlmN (Leptospira interrogans serogroup Icterohaemorrhagiae serovar Lai (strain 56601)).